Consider the following 652-residue polypeptide: DNA mismatch repair protein MutL (652 aa).

Disordered regions lie at residues 357–377 (LGAN…NYPS) and 425–457 (PDKG…NSTD). Residues 365–375 (SHSSNTPTLNY) show a composition bias toward polar residues.

Belongs to the DNA mismatch repair MutL/HexB family.

This protein is involved in the repair of mismatches in DNA. It is required for dam-dependent methyl-directed DNA mismatch repair. May act as a 'molecular matchmaker', a protein that promotes the formation of a stable complex between two or more DNA-binding proteins in an ATP-dependent manner without itself being part of a final effector complex. In Colwellia psychrerythraea (strain 34H / ATCC BAA-681) (Vibrio psychroerythus), this protein is DNA mismatch repair protein MutL.